Here is an 89-residue protein sequence, read N- to C-terminus: Small ribosomal subunit protein uS15 (89 aa).

Belongs to the universal ribosomal protein uS15 family. Part of the 30S ribosomal subunit. Forms a bridge to the 50S subunit in the 70S ribosome, contacting the 23S rRNA.

Its function is as follows. One of the primary rRNA binding proteins, it binds directly to 16S rRNA where it helps nucleate assembly of the platform of the 30S subunit by binding and bridging several RNA helices of the 16S rRNA. Functionally, forms an intersubunit bridge (bridge B4) with the 23S rRNA of the 50S subunit in the ribosome. This is Small ribosomal subunit protein uS15 from Arthrobacter sp. (strain FB24).